Reading from the N-terminus, the 399-residue chain is Bombesin receptor subtype-3 (399 aa).

Topologically, residues Met1–Ser41 are extracellular. 3 N-linked (GlcNAc...) asparagine glycosylation sites follow: Asn10, Asn18, and Asn29. Residues Pro42–Leu63 traverse the membrane as a helical segment. The Cytoplasmic portion of the chain corresponds to Gly64–Pro82. The helical transmembrane segment at Asn83–Val103 threads the bilayer. Over Asp104–Lys121 the chain is Extracellular. A disulfide bond links Cys120 and Cys203. Residues Val122–Ala143 form a helical membrane-spanning segment. Topologically, residues Asp144–Lys163 are cytoplasmic. Residues Thr164 to Ile184 traverse the membrane as a helical segment. Residues Phe185 to Leu220 lie on the Extracellular side of the membrane. A helical transmembrane segment spans residues Cys221–Ala241. Over Arg242–Thr272 the chain is Cytoplasmic. Residues Val273–Tyr293 form a helical membrane-spanning segment. Residues His294–Ile313 are Extracellular-facing. A helical membrane pass occupies residues Phe314–Leu333. Residues Ser334–Val399 lie on the Cytoplasmic side of the membrane. Cys347 is lipidated: S-palmitoyl cysteine.

This sequence belongs to the G-protein coupled receptor 1 family. As to quaternary structure, interacts with C6orf89.

It is found in the cell membrane. Functionally, role in sperm cell division, maturation, or function. This receptor mediates its action by association with G proteins that activate a phosphatidylinositol-calcium second messenger system. The chain is Bombesin receptor subtype-3 (Brs3) from Mus musculus (Mouse).